The chain runs to 388 residues: Dual-specificity RNA methyltransferase RlmN (388 aa).

E109 acts as the Proton acceptor in catalysis. A Radical SAM core domain is found at 115–354; the sequence is EDDRATLCVS…TIVRKTRGDD (240 aa). Cysteines 122 and 359 form a disulfide. [4Fe-4S] cluster is bound by residues C129, C133, and C136. S-adenosyl-L-methionine-binding positions include 183–184, S215, 237–239, and N316; these read GE and SLH. C359 acts as the S-methylcysteine intermediate in catalysis.

It belongs to the radical SAM superfamily. RlmN family. The cofactor is [4Fe-4S] cluster.

The protein localises to the cytoplasm. The catalysed reaction is adenosine(2503) in 23S rRNA + 2 reduced [2Fe-2S]-[ferredoxin] + 2 S-adenosyl-L-methionine = 2-methyladenosine(2503) in 23S rRNA + 5'-deoxyadenosine + L-methionine + 2 oxidized [2Fe-2S]-[ferredoxin] + S-adenosyl-L-homocysteine. It catalyses the reaction adenosine(37) in tRNA + 2 reduced [2Fe-2S]-[ferredoxin] + 2 S-adenosyl-L-methionine = 2-methyladenosine(37) in tRNA + 5'-deoxyadenosine + L-methionine + 2 oxidized [2Fe-2S]-[ferredoxin] + S-adenosyl-L-homocysteine. Its function is as follows. Specifically methylates position 2 of adenine 2503 in 23S rRNA and position 2 of adenine 37 in tRNAs. m2A2503 modification seems to play a crucial role in the proofreading step occurring at the peptidyl transferase center and thus would serve to optimize ribosomal fidelity. This Salmonella typhi protein is Dual-specificity RNA methyltransferase RlmN.